A 496-amino-acid polypeptide reads, in one-letter code: Iroquois-class homeodomain protein irx-4-A (496 aa).

The segment at residues 141–203 is a DNA-binding region (homeobox; TALE-type); that stretch reads GSSRRKNATR…NARRRLKKEN (63 aa). Residues 203 to 246 form a disordered region; sequence NKMTWPPRNKCSDEKRPYDEEEEEEEEEEDSQKATIKNEKKTVD. Over residues 221-232 the composition is skewed to acidic residues; it reads DEEEEEEEEEED.

This sequence belongs to the TALE/IRO homeobox family. Expressed in the neural plate in overlapping patterns with other irx members, which all share an anterior border of expression. At stage 20, expressed in a subset of cells in the developing hindbrain with expression appearing above the otic vesicle by stage 26. Expression in retina cells begins at stage 28, continuing at later stages and is limited to a subset of retinal cells of the optic cup. Also expressed in the ventricle of the heart from stage 36 (late tailbud) onwards. Only expressed in the pronephros at tadpole stage.

It localises to the nucleus. Its function is as follows. Acts partially redundantly with other irx members in neural patterning. Required for formation of the posterior forebrain, midbrain, hindbrain, and to a lesser extent, spinal cord. Patterns the neuroectoderm in both the anterior/posterior and dorsal/ventral axes. Does not appear to play a role in pronephros kidney development. This chain is Iroquois-class homeodomain protein irx-4-A (irx4-a), found in Xenopus laevis (African clawed frog).